Here is a 359-residue protein sequence, read N- to C-terminus: DNA-directed RNA polymerase RPB3-11 homolog (359 aa).

This sequence in the N-terminal section; belongs to the archaeal RpoD/eukaryotic RPB3 RNA polymerase subunit family. The protein in the C-terminal section; belongs to the archaeal RpoL/eukaryotic RPB11/RPC19 RNA polymerase subunit family. In terms of assembly, part of the viral DNA-directed RNA polymerase that consists of 8 polII-like subunits (RPB1, RPB2, RPB3, RPB5, RPB6, RPB7, RPB9, RPB10), a capping enzyme and a termination factor.

The protein localises to the host cytoplasm. It is found in the virion. In terms of biological role, component of the DNA-directed RNA polymerase (RNAP) that catalyzes the transcription in the cytoplasm of viral DNA into RNA using the four ribonucleoside triphosphates as substrates. In Ornithodoros (relapsing fever ticks), this protein is DNA-directed RNA polymerase RPB3-11 homolog.